A 203-amino-acid chain; its full sequence is Pyridoxal 5'-phosphate synthase subunit PdxT (203 aa).

Residue 51 to 53 (GES) participates in L-glutamine binding. The Nucleophile role is filled by Cys83. Residues Arg110 and 137–138 (IR) contribute to the L-glutamine site. Residues His172 and Glu174 each act as charge relay system in the active site.

The protein belongs to the glutaminase PdxT/SNO family. In the presence of PdxS, forms a dodecamer of heterodimers. Only shows activity in the heterodimer.

It carries out the reaction aldehydo-D-ribose 5-phosphate + D-glyceraldehyde 3-phosphate + L-glutamine = pyridoxal 5'-phosphate + L-glutamate + phosphate + 3 H2O + H(+). The catalysed reaction is L-glutamine + H2O = L-glutamate + NH4(+). It participates in cofactor biosynthesis; pyridoxal 5'-phosphate biosynthesis. Its function is as follows. Catalyzes the hydrolysis of glutamine to glutamate and ammonia as part of the biosynthesis of pyridoxal 5'-phosphate. The resulting ammonia molecule is channeled to the active site of PdxS. The protein is Pyridoxal 5'-phosphate synthase subunit PdxT of Thermoplasma acidophilum (strain ATCC 25905 / DSM 1728 / JCM 9062 / NBRC 15155 / AMRC-C165).